A 274-amino-acid polypeptide reads, in one-letter code: Large ribosomal subunit protein uL2cz/uL2cy (274 aa).

2 disordered regions span residues 1 to 23 (MAIH…SQVK) and 223 to 274 (MNPV…RRSK).

This sequence belongs to the universal ribosomal protein uL2 family. In terms of assembly, part of the 50S ribosomal subunit.

It is found in the plastid. The protein resides in the chloroplast. This is Large ribosomal subunit protein uL2cz/uL2cy (rpl2-A) from Ranunculus macranthus (Large buttercup).